The chain runs to 425 residues: TRAF family member-associated NF-kappa-B activator (425 aa).

Met-1 carries the post-translational modification N-acetylmethionine. A necessary for interaction with ZC3H12A region spans residues 1–31; it reads MDKNIGEQLNKAYEAFRQACMDRDSAVKELQ. The stretch at 22–62 forms a coiled coil; sequence DRDSAVKELQQKTENYEQRIREQQEQLSLQQTIIDKLKSQL. The necessary for interaction with TRAF6 stretch occupies residues 70–191; that stretch reads DNNYGCVPLL…QCTDKTDKQE (122 aa). Residues Ser-126 and Ser-129 each carry the phosphoserine modification. An interaction with TBK1 and IKBKE region spans residues 133–172; that stretch reads HERGNIEKTFWDLKEEFHKICMLAKAQKDHLSKLNIPDTA. The tract at residues 172 to 191 is TRAF family member interaction; the sequence is ATETQCSVPIQCTDKTDKQE. Phosphoserine is present on residues Ser-178 and Ser-208. Phosphothreonine is present on Thr-213. Phosphoserine occurs at positions 225, 228, 341, 354, and 357. The UBZ1-type zinc finger occupies 393-420; sequence PRVCEFCQAVFPPSITSRGDFLRHLNSH. Zn(2+)-binding residues include Cys-396, Cys-399, His-416, and His-420.

Homodimer. Found in a deubiquitination complex with TANK, USP10 and ZC3H12A; this complex inhibits genotoxic stress- or interleukin-1-beta-mediated NF-kappaB activation by promoting IKBKG or TRAF6 deubiquitination. Interacts with IKBKG; this interaction increases in response to DNA damage. Interacts with TRAF6; this interaction increases in response to DNA damage and recruits USP10 to the ubiquitinated TRAF6. Interacts with USP10; this interaction increases in response to DNA damage. Interacts with ZC3H12A; this interaction increases in response to DNA damage. Interacts with TBK1. Interacts with IKBKE. Also interacts with TRAF1, TRAF2, and TRAF3 by binding to their TRAF-C domains; the interaction with TRAF2 is disrupted by the phosphorylation of TANK by IKBKE. Interacts more strongly with TRAF1 and TRAF2 than TRAF3. Interacts with IKBKG; the interaction is enhanced by IKBKE and TBK1. Part of a ternary complex consisting of TANK, IKBKB and IKBKG. In terms of assembly, (Microbial infection) Interacts with vaccinia virus protein C6. As to quaternary structure, (Microbial infection) Interacts with Seneca Valley virus protease 3C; this interaction allows the cleavage of TANK and subsequent suppression of host innate immunity. Phosphorylated by IKBKE. In terms of processing, (Microbial infection) Cleaved by encephalomyocarditis virus (EMCV) protease 3C. This cleavage allows the virus to disrupt the TANK-TBK1-IKKepsilon-IRF3 complex, thereby inhibiting the induction of the IFN-beta signal pathway. Post-translationally, (Microbial infection) Cleaved by Seneca Valley virus protease 3C allowing the virus to suppress interferon type-I through both RIG-I and Toll-like receptor-dependent pathways. As to expression, ubiquitous.

The protein resides in the cytoplasm. In terms of biological role, adapter protein involved in I-kappa-B-kinase (IKK) regulation which constitutively binds TBK1 and IKBKE playing a role in antiviral innate immunity. Acts as a regulator of TRAF function by maintaining them in a latent state. Blocks TRAF2 binding to LMP1 and inhibits LMP1-mediated NF-kappa-B activation. Negatively regulates NF-kappaB signaling and cell survival upon DNA damage. Plays a role as an adapter to assemble ZC3H12A, USP10 in a deubiquitination complex which plays a negative feedback response to attenuate NF-kappaB activation through the deubiquitination of IKBKG or TRAF6 in response to interleukin-1-beta (IL1B) stimulation or upon DNA damage. Promotes UBP10-induced deubiquitination of TRAF6 in response to DNA damage. May control negatively TRAF2-mediated NF-kappa-B activation signaled by CD40, TNFR1 and TNFR2. This is TRAF family member-associated NF-kappa-B activator (TANK) from Homo sapiens (Human).